The primary structure comprises 1065 residues: DNA-directed RNA polymerase subunit beta (1065 aa).

This sequence belongs to the RNA polymerase beta chain family. In plastids the minimal PEP RNA polymerase catalytic core is composed of four subunits: alpha, beta, beta', and beta''. When a (nuclear-encoded) sigma factor is associated with the core the holoenzyme is formed, which can initiate transcription.

It localises to the plastid. The protein resides in the chloroplast. The catalysed reaction is RNA(n) + a ribonucleoside 5'-triphosphate = RNA(n+1) + diphosphate. Its function is as follows. DNA-dependent RNA polymerase catalyzes the transcription of DNA into RNA using the four ribonucleoside triphosphates as substrates. In Marchantia polymorpha (Common liverwort), this protein is DNA-directed RNA polymerase subunit beta.